The sequence spans 1207 residues: Histidine kinase 1 (1207 aa).

Positions 1 to 10 are enriched in polar residues; sequence MRGDSFSMSI. The segment at 1–20 is disordered; it reads MRGDSFSMSIENLPDSPMGS. The Cytoplasmic segment spans residues 1-81; the sequence is MRGDSFSMSI…SSYYSVFVVR (81 aa). The helical transmembrane segment at 82–102 threads the bilayer; sequence LAIMVMLAILIGLLTVLTWHF. The Extracellular portion of the chain corresponds to 103–446; the sequence is TRIYTKQSLQ…GKVDERAFKT (344 aa). A helical transmembrane segment spans residues 447-467; it reads LIILISASVCIFFIGCVCILI. Residues 468–1207 are Cytoplasmic-facing; it reads LTNGVSKEMK…PSAFQTSLSA (740 aa). The region spanning 505–763 is the Histidine kinase domain; that stretch reads NMSHELRTPM…LMRLYLILST (259 aa). His-508 bears the Phosphohistidine; by autocatalysis mark. 2 disordered regions span residues 964–987 and 1000–1021; these read DTCS…VKPS and DATT…PEEE. Over residues 975–984 the composition is skewed to basic and acidic residues; sequence SGEKQVDKSV. Residues 1000 to 1014 are compositionally biased toward low complexity; that stretch reads DATTSNDDSTSASMT. Positions 1045-1196 constitute a Response regulatory domain; the sequence is RILLAEDTPV…LMVSTILSLT (152 aa). Asp-1127 is modified (4-aspartylphosphate).

As to quaternary structure, interacts with AHP2, depending of the phosphorylation state of Asp-1075 in the receiver domain, but probably not with AHP1 and AHP3. Autophosphorylated predominantly on His residues. Activation probably requires a transfer of a phosphate group between a His in the transmitter domain and an Asp of the receiver domain. As to expression, mostly expressed in roots, and, to a lower extent, in stems, leaves and flowers.

It localises to the cell membrane. It carries out the reaction ATP + protein L-histidine = ADP + protein N-phospho-L-histidine.. Its function is as follows. Functions as an osmosensor histidine kinase that detects water stress and transmits the stress signal to a downstream MAPK cascade. This protein undergoes an ATP-dependent autophosphorylation at a conserved histidine residue in the kinase core, and a phosphoryl group is then transferred to a conserved aspartate residue in the receiver domain. Positive regulator of drought and salt stress responses, and abscisic acid (ABA) signaling. Confers drought tolerance, probably by regulating levels of ABA accumulation. Plays a redundant role in regulating plant growth and development. Required for the regulation of desiccation processes during seed formation. This is Histidine kinase 1 (AHK1) from Arabidopsis thaliana (Mouse-ear cress).